The primary structure comprises 443 residues: Thymidine phosphorylase (443 aa).

Belongs to the thymidine/pyrimidine-nucleoside phosphorylase family. As to quaternary structure, homodimer.

The enzyme catalyses thymidine + phosphate = 2-deoxy-alpha-D-ribose 1-phosphate + thymine. The protein operates within pyrimidine metabolism; dTMP biosynthesis via salvage pathway; dTMP from thymine: step 1/2. In terms of biological role, the enzymes which catalyze the reversible phosphorolysis of pyrimidine nucleosides are involved in the degradation of these compounds and in their utilization as carbon and energy sources, or in the rescue of pyrimidine bases for nucleotide synthesis. This Shewanella amazonensis (strain ATCC BAA-1098 / SB2B) protein is Thymidine phosphorylase.